Here is a 603-residue protein sequence, read N- to C-terminus: D-3-phosphoglycerate dehydrogenase 1, chloroplastic (603 aa).

A chloroplast-targeting transit peptide spans 1-54; that stretch reads MSATAAASSSIAVATNSLRNVTLSSRSPLPSAISVAFPSRGRNTLQRRLVLVSC. Residues 210-211, aspartate 230, 289-291, and aspartate 315 each bind NAD(+); these read KV and VAR. The active site involves arginine 291. Residue glutamate 320 is part of the active site. Histidine 339 functions as the Proton donor in the catalytic mechanism. Residue 339–342 participates in NAD(+) binding; the sequence is HLGA. In terms of domain architecture, ACT spans 531 to 603; that stretch reads IILCRQVDQP…AVEEFVFLKL (73 aa).

The protein belongs to the D-isomer specific 2-hydroxyacid dehydrogenase family. In terms of tissue distribution, ubiquitous, but highly expressed in roots. Expressed in vasculature, root and shoot meristems, distal part of cotyledons and leaves, anther, stigma and pollen grains. Detected at the tip of the cotyledons in late embryos.

The protein localises to the plastid. The protein resides in the chloroplast. It carries out the reaction (2R)-3-phosphoglycerate + NAD(+) = 3-phosphooxypyruvate + NADH + H(+). The protein operates within amino-acid biosynthesis; L-serine biosynthesis; L-serine from 3-phospho-D-glycerate: step 1/3. With respect to regulation, partially inhibited by 5 mM serine. Involved in the plastidial phosphorylated pathway of serine biosynthesis (PPSB). Required for mature pollen development. The sequence is that of D-3-phosphoglycerate dehydrogenase 1, chloroplastic (PGDH1) from Arabidopsis thaliana (Mouse-ear cress).